Here is a 494-residue protein sequence, read N- to C-terminus: BTB/POZ domain and ankyrin repeat-containing protein NH5.1 (494 aa).

A BTB domain is found at 25-130; that stretch reads SDVAFSVEGR…LYSGQASVAA (106 aa). Residues 60 to 94 are disordered; sequence NHQPPPPPPPLNWPMAGGGGGGSGGGGRGGAGGGG. The segment covering 61 to 71 has biased composition (pro residues); sequence HQPPPPPPPLN. Residues 75 to 94 show a composition bias toward gly residues; sequence AGGGGGGSGGGGRGGAGGGG. Residues 136–150 form a C2HC NPR-type zinc finger; sequence LPGCGARGCWHTRCG. 4 residues coordinate Zn(2+): cysteine 139, cysteine 144, histidine 146, and cysteine 149. ANK repeat units follow at residues 274–302, 303–333, 338–367, and 371–405; these read NKIR…GLDL, DDAL…DVNS, TGKT…DPNS, and DGVT…KLRL. Disordered regions lie at residues 421–443 and 469–494; these read DGAP…PRSD and AAGE…NGFA.

Belongs to the plant 'ANKYRIN-BTB/POZ' family. 'NOOT-BOP-COCH-like' (NBCL) subfamily. In terms of assembly, homodimer. Interacts with TGAL5, TGAL7, TGAL8 and TGAL9.

It is found in the nucleus. The protein resides in the cytoplasm. It functions in the pathway protein modification; protein ubiquitination. May act as a substrate-specific adapter of an E3 ubiquitin-protein ligase complex (CUL3-RBX1-BTB) which mediates the ubiquitination and subsequent proteasomal degradation of target proteins. Transcriptional co-regulator involved in the promotion of leaf and floral meristem fate and determinacy. Required for the abscission of senescent organs, probably by regulating the cell wall disorganization in abscission zones (AZs, e.g. pulvini at the base of leaves). This Oryza sativa subsp. japonica (Rice) protein is BTB/POZ domain and ankyrin repeat-containing protein NH5.1.